Here is a 642-residue protein sequence, read N- to C-terminus: 3D-(3,5/4)-trihydroxycyclohexane-1,2-dione hydrolase (642 aa).

Glutamate 71 serves as a coordination point for thiamine diphosphate. Positions 446–526 are thiamine pyrophosphate binding; it reads SLPGDVQRIW…INILVFDNSG (81 aa). 2 residues coordinate Mg(2+): aspartate 497 and asparagine 524.

The protein belongs to the TPP enzyme family. The cofactor is Mg(2+). Thiamine diphosphate serves as cofactor.

It catalyses the reaction 3D-3,5/4-trihydroxycyclohexane-1,2-dione + H2O = 5-deoxy-D-glucuronate + H(+). It participates in polyol metabolism; myo-inositol degradation into acetyl-CoA; acetyl-CoA from myo-inositol: step 3/7. In terms of biological role, involved in the cleavage of the C1-C2 bond of 3D-(3,5/4)-trihydroxycyclohexane-1,2-dione (THcHDO) to yield 5-deoxy-glucuronate (5DG). The chain is 3D-(3,5/4)-trihydroxycyclohexane-1,2-dione hydrolase from Lacticaseibacillus casei (Lactobacillus casei).